The chain runs to 364 residues: Aminomethyltransferase (364 aa).

This sequence belongs to the GcvT family. As to quaternary structure, the glycine cleavage system is composed of four proteins: P, T, L and H.

The enzyme catalyses N(6)-[(R)-S(8)-aminomethyldihydrolipoyl]-L-lysyl-[protein] + (6S)-5,6,7,8-tetrahydrofolate = N(6)-[(R)-dihydrolipoyl]-L-lysyl-[protein] + (6R)-5,10-methylene-5,6,7,8-tetrahydrofolate + NH4(+). In terms of biological role, the glycine cleavage system catalyzes the degradation of glycine. In Shewanella sp. (strain ANA-3), this protein is Aminomethyltransferase.